Consider the following 172-residue polypeptide: Large ribosomal subunit protein uL10 (172 aa).

Belongs to the universal ribosomal protein uL10 family. Part of the ribosomal stalk of the 50S ribosomal subunit. The N-terminus interacts with L11 and the large rRNA to form the base of the stalk. The C-terminus forms an elongated spine to which L12 dimers bind in a sequential fashion forming a multimeric L10(L12)X complex.

In terms of biological role, forms part of the ribosomal stalk, playing a central role in the interaction of the ribosome with GTP-bound translation factors. This chain is Large ribosomal subunit protein uL10 (rplJ), found in Chlamydia trachomatis serovar D (strain ATCC VR-885 / DSM 19411 / UW-3/Cx).